Reading from the N-terminus, the 265-residue chain is Hydroxyethylthiazole kinase (265 aa).

Residue Met-50 coordinates substrate. ATP contacts are provided by Arg-125 and Thr-171. Position 198 (Gly-198) interacts with substrate.

It belongs to the Thz kinase family. Mg(2+) is required as a cofactor.

It carries out the reaction 5-(2-hydroxyethyl)-4-methylthiazole + ATP = 4-methyl-5-(2-phosphooxyethyl)-thiazole + ADP + H(+). It functions in the pathway cofactor biosynthesis; thiamine diphosphate biosynthesis; 4-methyl-5-(2-phosphoethyl)-thiazole from 5-(2-hydroxyethyl)-4-methylthiazole: step 1/1. Functionally, catalyzes the phosphorylation of the hydroxyl group of 4-methyl-5-beta-hydroxyethylthiazole (THZ). The chain is Hydroxyethylthiazole kinase from Salmonella arizonae (strain ATCC BAA-731 / CDC346-86 / RSK2980).